The chain runs to 175 residues: Ribulose bisphosphate carboxylase small subunit, chloroplastic (175 aa).

The transit peptide at 1–46 (MAPTVMASSATSVAPFQGLKSTAGLPVSRRSNGASLGSVSNGGRIR) directs the protein to the chloroplast.

Belongs to the RuBisCO small chain family. In terms of assembly, heterohexadecamer of 8 large and 8 small subunits.

The protein localises to the plastid. Its subcellular location is the chloroplast. RuBisCO catalyzes two reactions: the carboxylation of D-ribulose 1,5-bisphosphate, the primary event in carbon dioxide fixation, as well as the oxidative fragmentation of the pentose substrate. Both reactions occur simultaneously and in competition at the same active site. Although the small subunit is not catalytic it is essential for maximal activity. In Aegilops tauschii (Tausch's goatgrass), this protein is Ribulose bisphosphate carboxylase small subunit, chloroplastic.